The chain runs to 78 residues: Colicin-V immunity protein (78 aa).

Its function is as follows. This protein is able to protect a cell, which harbors the plasmid ColV encoding colicin V, against colicin V. In Escherichia coli, this protein is Colicin-V immunity protein (cvi).